Here is a 164-residue protein sequence, read N- to C-terminus: MTTFLGNSVTFTGKQLQVGDIAKDFLLIATDLSQKSLKDFEGKKKVISVVPSIDTGICSKQTRTFNEELSELDNTVVITVSMDLPFAQKRWCSAEGLDNVILLSDFYDHSFGQDYALLMNEWHLLTRAVLILDEHNKVTYTEYVDNVNSDVDYEAAINAAKILP.

One can recognise a Thioredoxin domain in the interval 16 to 162 (LQVGDIAKDF…YEAAINAAKI (147 aa)). The active-site Cysteine sulfenic acid (-SOH) intermediate is Cys58. Cys58 and Cys92 are joined by a disulfide.

The protein belongs to the peroxiredoxin family. Tpx subfamily. As to quaternary structure, homodimer.

The catalysed reaction is a hydroperoxide + [thioredoxin]-dithiol = an alcohol + [thioredoxin]-disulfide + H2O. Thiol-specific peroxidase that catalyzes the reduction of hydrogen peroxide and organic hydroperoxides to water and alcohols, respectively. Plays a role in cell protection against oxidative stress by detoxifying peroxides. In Streptococcus agalactiae serotype III (strain NEM316), this protein is Thiol peroxidase.